The sequence spans 89 residues: Small ribosomal subunit protein uS15 (89 aa).

It belongs to the universal ribosomal protein uS15 family. In terms of assembly, part of the 30S ribosomal subunit. Forms a bridge to the 50S subunit in the 70S ribosome, contacting the 23S rRNA.

In terms of biological role, one of the primary rRNA binding proteins, it binds directly to 16S rRNA where it helps nucleate assembly of the platform of the 30S subunit by binding and bridging several RNA helices of the 16S rRNA. Forms an intersubunit bridge (bridge B4) with the 23S rRNA of the 50S subunit in the ribosome. This Edwardsiella ictaluri (strain 93-146) protein is Small ribosomal subunit protein uS15.